The sequence spans 466 residues: GTPase Der (466 aa).

EngA-type G domains lie at 3–167 (PTLV…PDEP) and 176–350 (PKIA…GAAM). GTP contacts are provided by residues 9-16 (GRSNVGKS), 56-60 (DTGGF), 119-122 (NKTE), 182-189 (GRPNVGKS), 229-233 (DTAGL), and 294-297 (NKWD). The KH-like domain occupies 351–435 (AHLPTPRLTR…PLRIEFRTGR (85 aa)). The segment at 433-466 (TGRNPYAGKSPAPLTEAEAKRAHRRRRYGRKKYG) is disordered. A compositionally biased stretch (basic residues) spans 453–466 (RAHRRRRYGRKKYG).

This sequence belongs to the TRAFAC class TrmE-Era-EngA-EngB-Septin-like GTPase superfamily. EngA (Der) GTPase family. In terms of assembly, associates with the 50S ribosomal subunit.

In terms of biological role, GTPase that plays an essential role in the late steps of ribosome biogenesis. The protein is GTPase Der of Nitrosospira multiformis (strain ATCC 25196 / NCIMB 11849 / C 71).